A 312-amino-acid chain; its full sequence is Malate dehydrogenase (312 aa).

NAD(+)-binding positions include 7 to 13 and D34; that span reads GAAGGIG. Residues R81 and R87 each contribute to the substrate site. Residues N94 and 117 to 119 each bind NAD(+); that span reads ITN. Substrate is bound by residues N119 and R153. H177 (proton acceptor) is an active-site residue. Position 227 (M227) interacts with NAD(+).

Belongs to the LDH/MDH superfamily. MDH type 1 family. In terms of assembly, homodimer.

The catalysed reaction is (S)-malate + NAD(+) = oxaloacetate + NADH + H(+). In terms of biological role, catalyzes the reversible oxidation of malate to oxaloacetate. This is Malate dehydrogenase from Escherichia coli (strain 55989 / EAEC).